The chain runs to 97 residues: Co-chaperonin GroES (97 aa).

The protein belongs to the GroES chaperonin family. Heptamer of 7 subunits arranged in a ring. Interacts with the chaperonin GroEL.

The protein resides in the cytoplasm. Functionally, together with the chaperonin GroEL, plays an essential role in assisting protein folding. The GroEL-GroES system forms a nano-cage that allows encapsulation of the non-native substrate proteins and provides a physical environment optimized to promote and accelerate protein folding. GroES binds to the apical surface of the GroEL ring, thereby capping the opening of the GroEL channel. The sequence is that of Co-chaperonin GroES from Klebsiella pneumoniae subsp. pneumoniae (strain ATCC 700721 / MGH 78578).